The following is a 175-amino-acid chain: ATP synthase subunit b (175 aa).

Residues 22–42 (LNLLETNIINIAIVFGLLIFL) form a helical membrane-spanning segment.

It belongs to the ATPase B chain family. F-type ATPases have 2 components, F(1) - the catalytic core - and F(0) - the membrane proton channel. F(1) has five subunits: alpha(3), beta(3), gamma(1), delta(1), epsilon(1). F(0) has four main subunits: a(1), b(1), b'(1) and c(10-14). The alpha and beta chains form an alternating ring which encloses part of the gamma chain. F(1) is attached to F(0) by a central stalk formed by the gamma and epsilon chains, while a peripheral stalk is formed by the delta, b and b' chains.

The protein localises to the cell inner membrane. F(1)F(0) ATP synthase produces ATP from ADP in the presence of a proton or sodium gradient. F-type ATPases consist of two structural domains, F(1) containing the extramembraneous catalytic core and F(0) containing the membrane proton channel, linked together by a central stalk and a peripheral stalk. During catalysis, ATP synthesis in the catalytic domain of F(1) is coupled via a rotary mechanism of the central stalk subunits to proton translocation. In terms of biological role, component of the F(0) channel, it forms part of the peripheral stalk, linking F(1) to F(0). This is ATP synthase subunit b from Gloeobacter violaceus (strain ATCC 29082 / PCC 7421).